The sequence spans 231 residues: Uridylate kinase (231 aa).

9–12 contacts ATP; that stretch reads KLSG. Gly49 contributes to the UMP binding site. 2 residues coordinate ATP: Gly50 and Arg54. Residues Asp69 and 130–137 each bind UMP; that span reads AGMPYFST. 3 residues coordinate ATP: Asn158, Tyr164, and Asp167.

The protein belongs to the UMP kinase family. Homohexamer.

It is found in the cytoplasm. The enzyme catalyses UMP + ATP = UDP + ADP. Its pathway is pyrimidine metabolism; CTP biosynthesis via de novo pathway; UDP from UMP (UMPK route): step 1/1. With respect to regulation, inhibited by UTP. Catalyzes the reversible phosphorylation of UMP to UDP. This Tropheryma whipplei (strain Twist) (Whipple's bacillus) protein is Uridylate kinase.